Consider the following 26-residue polypeptide: Acetylcholine receptor subunit delta (26 aa).

It belongs to the ligand-gated ion channel (TC 1.A.9) family. Acetylcholine receptor (TC 1.A.9.1) subfamily. As to quaternary structure, pentamer of two alpha chains, and one each of the beta, delta, and gamma chains.

The protein localises to the postsynaptic cell membrane. It is found in the cell membrane. The catalysed reaction is K(+)(in) = K(+)(out). It carries out the reaction Na(+)(in) = Na(+)(out). Functionally, after binding acetylcholine, the AChR responds by an extensive change in conformation that affects all subunits and leads to opening of an ion-conducting channel across the plasma membrane. This Electrophorus electricus (Electric eel) protein is Acetylcholine receptor subunit delta (chrnd).